The chain runs to 635 residues: Threonine--tRNA ligase (635 aa).

The TGS domain occupies 1–61 (MPIITLPDGN…EKDANIAIIT (61 aa)). The segment at 242–533 (DHRKIGKQLD…LTEEYAGVYP (292 aa)) is catalytic. Positions 333, 384, and 510 each coordinate Zn(2+).

Belongs to the class-II aminoacyl-tRNA synthetase family. As to quaternary structure, homodimer. Zn(2+) is required as a cofactor.

The protein localises to the cytoplasm. It carries out the reaction tRNA(Thr) + L-threonine + ATP = L-threonyl-tRNA(Thr) + AMP + diphosphate + H(+). In terms of biological role, catalyzes the attachment of threonine to tRNA(Thr) in a two-step reaction: L-threonine is first activated by ATP to form Thr-AMP and then transferred to the acceptor end of tRNA(Thr). Also edits incorrectly charged L-seryl-tRNA(Thr). This Psychromonas ingrahamii (strain DSM 17664 / CCUG 51855 / 37) protein is Threonine--tRNA ligase.